Here is a 199-residue protein sequence, read N- to C-terminus: Transgelin-2 (199 aa).

The residue at position 2 (Ala2) is an N-acetylalanine. Ser11 carries the post-translational modification Phosphoserine. Lys17 and Lys20 each carry N6-acetyllysine. The 113-residue stretch at 24–136 (ADLEQILIQW…RTLMNLGGLA (113 aa)) folds into the Calponin-homology (CH) domain. Ser163 is modified (phosphoserine). A Glycyl lysine isopeptide (Lys-Gly) (interchain with G-Cter in SUMO2) cross-link involves residue Lys171. A Calponin-like repeat occupies 174–199 (IGLQMGTNRGASQAGMTGYGMPRQIL). Thr180 is modified (phosphothreonine). Arg182 and Arg196 each carry omega-N-methylarginine.

It belongs to the calponin family.

The polypeptide is Transgelin-2 (TAGLN2) (Bos taurus (Bovine)).